The sequence spans 77 residues: MQLRKALLVIFVAYLLVTDEAEAFWGFLGKLAMKAVPSLIGGNKSSSKRKREIEDLFDPYQKDLDLQRLDRFFSQFQ.

Residues 1 to 23 (MQLRKALLVIFVAYLLVTDEAEA) form the signal peptide. Residues 49 to 77 (RKREIEDLFDPYQKDLDLQRLDRFFSQFQ) constitute a propeptide that is removed on maturation.

It belongs to the non-disulfide-bridged peptide (NDBP) superfamily. Medium-length antimicrobial peptide (group 3) family. As to expression, expressed by the venom gland.

Its subcellular location is the secreted. It localises to the target cell membrane. Functionally, antimicrobial peptide with potent activity against Gram-positive bacteria S.aureus (MIC=10 uM) and S.agalactiaea (MIC=15 uM), and Gram-negative bacteria E.coli (MIC=24 uM) and P.aeruginosa (MIC=15 uM), as well as against yeasts Candida albicans (MIC=3.1 uM) and C.glabrata (MIC=25 uM). Also elicits low hemolysis on human erythrocytes (HC(50)=167 uM). The protein is VpAmp2.0 of Mesomexovis punctatus (Scorpion).